We begin with the raw amino-acid sequence, 392 residues long: MAQHLTTEALRKDFLAVFGQEADQTFFSPGRINLIGEHTDYNGGHVFPAAISLGTYGAARKRDDQVLRFYSANFEDKGIIEVPLADLKFEKEHNWTNYPKGVLHFLQEAGHVIDKGFDFYVYGNIPNGAGLSSSASLELLTGVVAEHLFDLKLERLDLVKIGKQTENNFIGVNSGIMDQFAIGMGADQRAIYLDTNTLEYDLVPLDLKDNVVVIMNTNKRRELADSKYNERRAECEKAVEELQVSLDIQTLGELDEWAVDQYSYLIKDENRLKRARHAVLENQRTLKAQVALQAGDLETFGRLMNASHVSLEHDYEVTGLELDTLVHTAWAQEGVLGARMTGAGFGGCAIALVQKDTVEAFKEAVGKHYEEVVGYAPSFYIAEVAGGTRVLD.

37-40 (EHTD) is a substrate binding site. ATP contacts are provided by residues Ser-71 and 128–134 (GAGLSSS). Positions 134 and 166 each coordinate Mg(2+). Asp-178 acts as the Proton acceptor in catalysis. Residue Tyr-228 coordinates substrate.

The protein belongs to the GHMP kinase family. GalK subfamily.

The protein resides in the cytoplasm. It carries out the reaction alpha-D-galactose + ATP = alpha-D-galactose 1-phosphate + ADP + H(+). It functions in the pathway carbohydrate metabolism; galactose metabolism. In terms of biological role, catalyzes the transfer of the gamma-phosphate of ATP to D-galactose to form alpha-D-galactose-1-phosphate (Gal-1-P). This Streptococcus pneumoniae serotype 4 (strain ATCC BAA-334 / TIGR4) protein is Galactokinase.